Consider the following 349-residue polypeptide: tRNA-specific 2-thiouridylase MnmA (349 aa).

ATP contacts are provided by residues 7–14 and Leu-33; that span reads GLSGGVDS. The active-site Nucleophile is Cys-94. Cys-94 and Cys-193 are joined by a disulfide. Gly-119 is a binding site for ATP. The interval 143–145 is interaction with tRNA; that stretch reads KDQ. Cys-193 functions as the Cysteine persulfide intermediate in the catalytic mechanism. The interval 298 to 299 is interaction with tRNA; that stretch reads RY.

This sequence belongs to the MnmA/TRMU family.

The protein resides in the cytoplasm. The catalysed reaction is S-sulfanyl-L-cysteinyl-[protein] + uridine(34) in tRNA + AH2 + ATP = 2-thiouridine(34) in tRNA + L-cysteinyl-[protein] + A + AMP + diphosphate + H(+). In terms of biological role, catalyzes the 2-thiolation of uridine at the wobble position (U34) of tRNA, leading to the formation of s(2)U34. The chain is tRNA-specific 2-thiouridylase MnmA from Gloeothece citriformis (strain PCC 7424) (Cyanothece sp. (strain PCC 7424)).